A 251-amino-acid chain; its full sequence is Pyrroloquinoline-quinone synthase (251 aa).

Belongs to the PqqC family.

It catalyses the reaction 6-(2-amino-2-carboxyethyl)-7,8-dioxo-1,2,3,4,7,8-hexahydroquinoline-2,4-dicarboxylate + 3 O2 = pyrroloquinoline quinone + 2 H2O2 + 2 H2O + H(+). Its pathway is cofactor biosynthesis; pyrroloquinoline quinone biosynthesis. Functionally, ring cyclization and eight-electron oxidation of 3a-(2-amino-2-carboxyethyl)-4,5-dioxo-4,5,6,7,8,9-hexahydroquinoline-7,9-dicarboxylic-acid to PQQ. In Klebsiella pneumoniae subsp. pneumoniae (strain ATCC 700721 / MGH 78578), this protein is Pyrroloquinoline-quinone synthase.